A 490-amino-acid chain; its full sequence is Glutathione reductase (490 aa).

FAD-binding residues include Ser-19 and Gly-20. Ser-19 contributes to the glutathione binding site. Arg-26 serves as a coordination point for glutathione. Glu-39, Thr-48, Cys-49, and Lys-57 together coordinate FAD. Cys-49 and Cys-54 are disulfide-bonded. Tyr-110 lines the glutathione pocket. Ala-126 provides a ligand contact to FAD. Positions 208, 211, 214, 231, and 237 each coordinate NADP(+). Ser-246 provides a ligand contact to glutathione. Position 297 (Gly-297) interacts with NADP(+). Asp-337 contacts FAD. Glu-343 lines the NADP(+) pocket. Thr-345 contributes to the FAD binding site. Residue Arg-353 coordinates glutathione. NADP(+) is bound at residue Val-379. A glutathione-binding site is contributed by Lys-432. Residue His-479 participates in FAD binding. His-479 serves as the catalytic Proton acceptor.

This sequence belongs to the class-I pyridine nucleotide-disulfide oxidoreductase family. As to quaternary structure, homodimer. Requires FAD as cofactor.

Its subcellular location is the cytoplasm. It is found in the mitochondrion. The catalysed reaction is 2 glutathione + NADP(+) = glutathione disulfide + NADPH + H(+). Functionally, catalyzes the reduction of glutathione disulfide (GSSG) to reduced glutathione (GSH). Constitutes the major mechanism to maintain a high GSH:GSSG ratio in the cytosol. The sequence is that of Glutathione reductase (GLR1) from Debaryomyces hansenii (strain ATCC 36239 / CBS 767 / BCRC 21394 / JCM 1990 / NBRC 0083 / IGC 2968) (Yeast).